The sequence spans 227 residues: Phosphoribosylformylglycinamidine synthase subunit PurQ (227 aa).

Residues 3-227 (FAVCVFPGSN…LMLWYSLLSD (225 aa)) form the Glutamine amidotransferase type-1 domain. Cys-86 functions as the Nucleophile in the catalytic mechanism. Catalysis depends on residues His-203 and Glu-205.

Part of the FGAM synthase complex composed of 1 PurL, 1 PurQ and 2 PurS subunits.

It localises to the cytoplasm. The enzyme catalyses N(2)-formyl-N(1)-(5-phospho-beta-D-ribosyl)glycinamide + L-glutamine + ATP + H2O = 2-formamido-N(1)-(5-O-phospho-beta-D-ribosyl)acetamidine + L-glutamate + ADP + phosphate + H(+). It carries out the reaction L-glutamine + H2O = L-glutamate + NH4(+). The protein operates within purine metabolism; IMP biosynthesis via de novo pathway; 5-amino-1-(5-phospho-D-ribosyl)imidazole from N(2)-formyl-N(1)-(5-phospho-D-ribosyl)glycinamide: step 1/2. Part of the phosphoribosylformylglycinamidine synthase complex involved in the purines biosynthetic pathway. Catalyzes the ATP-dependent conversion of formylglycinamide ribonucleotide (FGAR) and glutamine to yield formylglycinamidine ribonucleotide (FGAM) and glutamate. The FGAM synthase complex is composed of three subunits. PurQ produces an ammonia molecule by converting glutamine to glutamate. PurL transfers the ammonia molecule to FGAR to form FGAM in an ATP-dependent manner. PurS interacts with PurQ and PurL and is thought to assist in the transfer of the ammonia molecule from PurQ to PurL. The sequence is that of Phosphoribosylformylglycinamidine synthase subunit PurQ from Aquifex aeolicus (strain VF5).